A 328-amino-acid polypeptide reads, in one-letter code: Hairy/enhancer-of-split related with YRPW motif-like protein (328 aa).

Residues Met1–Asp57 form a disordered region. A compositionally biased stretch (polar residues) spans Gly24 to Gln42. Residues Gln42–Ala111 are transcriptional repression and interaction with NCOR1 and SIN3A. A bHLH domain is found at Ala43–Leu98. The Orange domain maps to Phe116–Leu153. The segment at Ser239 to Arg308 is disordered. Over residues Ala261 to Ser270 the composition is skewed to low complexity.

This sequence belongs to the HEY family. Self-associates. Interacts with GATA4, GATA6, HES1, HEY1 and HEY2. Interacts with HDAC1, NCOR1 and SIN3A.

It localises to the nucleus. In terms of biological role, downstream effector of Notch signaling which may be required for cardiovascular development. Transcriptional repressor which binds preferentially to the canonical E box sequence 5'-CACGTG-3'. Represses transcription by the cardiac transcriptional activators GATA4 and GATA6. The polypeptide is Hairy/enhancer-of-split related with YRPW motif-like protein (HEYL) (Homo sapiens (Human)).